The following is a 276-amino-acid chain: Putative olfactory receptor 10J6 (276 aa).

Residues M1 to I25 are Extracellular-facing. N-linked (GlcNAc...) asparagine glycosylation is present at N5. Residues T26–M46 traverse the membrane as a helical segment. The Cytoplasmic segment spans residues T47–H54. The helical transmembrane segment at L55–L75 threads the bilayer. The Extracellular segment spans residues F76–T99. C97 and C188 are joined by a disulfide. A helical transmembrane segment spans residues Q100–Y120. The Cytoplasmic portion of the chain corresponds to D121–K139. A helical membrane pass occupies residues V140–V160. At T161–I196 the chain is on the extracellular side. N-linked (GlcNAc...) asparagine glycosylation is present at N190. Residues I197–S216 form a helical membrane-spanning segment. Over Y217–T236 the chain is Cytoplasmic. The chain crosses the membrane as a helical span at residues F237–A257. At Y258–D270 the chain is on the extracellular side. Residues L271–T276 traverse the membrane as a helical segment.

This sequence belongs to the G-protein coupled receptor 1 family.

The protein resides in the cell membrane. In terms of biological role, odorant receptor. The chain is Putative olfactory receptor 10J6 (OR10J6P) from Homo sapiens (Human).